The following is a 148-amino-acid chain: Nucleoside diphosphate kinase 1 (148 aa).

Positions 9, 57, 85, 91, 102, and 112 each coordinate ATP. The active-site Pros-phosphohistidine intermediate is the histidine 115.

It belongs to the NDK family. Mg(2+) serves as cofactor. The N-terminus is blocked.

It catalyses the reaction a 2'-deoxyribonucleoside 5'-diphosphate + ATP = a 2'-deoxyribonucleoside 5'-triphosphate + ADP. It carries out the reaction a ribonucleoside 5'-diphosphate + ATP = a ribonucleoside 5'-triphosphate + ADP. In terms of biological role, major role in the synthesis of nucleoside triphosphates other than ATP. The ATP gamma phosphate is transferred to the NDP beta phosphate via a ping-pong mechanism, using a phosphorylated active-site intermediate. This is Nucleoside diphosphate kinase 1 (NDPK1) from Spinacia oleracea (Spinach).